Here is a 365-residue protein sequence, read N- to C-terminus: Aminomethyltransferase (365 aa).

This sequence belongs to the GcvT family. As to quaternary structure, the glycine cleavage system is composed of four proteins: P, T, L and H.

It carries out the reaction N(6)-[(R)-S(8)-aminomethyldihydrolipoyl]-L-lysyl-[protein] + (6S)-5,6,7,8-tetrahydrofolate = N(6)-[(R)-dihydrolipoyl]-L-lysyl-[protein] + (6R)-5,10-methylene-5,6,7,8-tetrahydrofolate + NH4(+). Functionally, the glycine cleavage system catalyzes the degradation of glycine. In Yersinia pestis bv. Antiqua (strain Antiqua), this protein is Aminomethyltransferase.